The primary structure comprises 380 residues: Probable tRNA-splicing endonuclease subunit sen2 (380 aa).

Catalysis depends on residues Tyr-281, His-289, and Lys-325.

This sequence belongs to the tRNA-intron endonuclease family. In terms of assembly, heterotetramer composed of sen2, sen15, sen34 and sen54. Interacts directly with sen54.

It catalyses the reaction pretRNA = a 3'-half-tRNA molecule with a 5'-OH end + a 5'-half-tRNA molecule with a 2',3'-cyclic phosphate end + an intron with a 2',3'-cyclic phosphate and a 5'-hydroxyl terminus.. Constitutes one of the two catalytic subunit of the tRNA-splicing endonuclease complex, a complex responsible for identification and cleavage of the splice sites in pre-tRNA. It cleaves pre-tRNA at the 5'- and 3'-splice sites to release the intron. The products are an intron and two tRNA half-molecules bearing 2',3'-cyclic phosphate and 5'-OH termini. There are no conserved sequences at the splice sites, but the intron is invariably located at the same site in the gene, placing the splice sites an invariant distance from the constant structural features of the tRNA body. This subunit may anchor the endonuclease complex to the nuclear membrane. Probably carries the active site for 5'-splice site cleavage. The sequence is that of Probable tRNA-splicing endonuclease subunit sen2 (sen2) from Schizosaccharomyces pombe (strain 972 / ATCC 24843) (Fission yeast).